A 160-amino-acid polypeptide reads, in one-letter code: SsrA-binding protein (160 aa).

The disordered stretch occupies residues 136-160 (KRDTMRERDSNRELQRAVRNKGKED).

It belongs to the SmpB family.

It is found in the cytoplasm. In terms of biological role, required for rescue of stalled ribosomes mediated by trans-translation. Binds to transfer-messenger RNA (tmRNA), required for stable association of tmRNA with ribosomes. tmRNA and SmpB together mimic tRNA shape, replacing the anticodon stem-loop with SmpB. tmRNA is encoded by the ssrA gene; the 2 termini fold to resemble tRNA(Ala) and it encodes a 'tag peptide', a short internal open reading frame. During trans-translation Ala-aminoacylated tmRNA acts like a tRNA, entering the A-site of stalled ribosomes, displacing the stalled mRNA. The ribosome then switches to translate the ORF on the tmRNA; the nascent peptide is terminated with the 'tag peptide' encoded by the tmRNA and targeted for degradation. The ribosome is freed to recommence translation, which seems to be the essential function of trans-translation. This is SsrA-binding protein from Pseudomonas putida (strain GB-1).